The primary structure comprises 756 residues: MTTSHILGFPRVGAKRELKFAQERYWRKELAEQDLLDLAKALREKNWKHQAAANADFVAVGDFTFYDHILDLQVATGAIPARFGFDSQNLTLDQYFQLARGNKDQFAIEMTKWFDTNYHYLVPEFQKSTAFKANPAHYVNQIREAKALGLNFKPVIVGPLTFLWLGKEKGEAFNRFDLLNQLVPVYVEILNALVAEGAEWIQIDEPALALDLPAEWVEAYKSVYTELSKVNAKLLLATYFGSVAEHAELLKALPVAGLHLDLVRAPEQLAAFEDYSKVLSAGVIEGRNIWRANLNKVLDVLEPLKAKLGERLWIAPSCSLLHTPFDLEVEVQLKEKNTALYSWLSFTLQKVEELNVLKQALNNGRASVQAALDASQVAADARATSKEIHRPEVAERLANLPKGADQRKSPFAERIVKQNAWLNLPLLPTTNIGSFPQTTEIRHARASFKKGELSLADYEAAMKKEIEYVVRRQEELDLDVLVHGEAERNDMVEYFGELLDGFAFTKFGWVQSYGSRCVKPPVIYGDVTRPEPMTVRWSQYAQSLTNRVMKGMLTGPVTILQWSFVRNDIPRSTVCKQIGVALSDEVLDLEAAGIKVIQIDEPAIREGLPLKRADWDAYLQWAGEAFRLSSMGVQDDTQIHTHMCYSEFNDILPAIAALDADVITIETSRSDMELLTAFADFKYPNDIGPGVYDIHSPRVPTATEVEHLLRKALNVIPKERLWVNPDCGLKTRGWTETIDQLKVMVDVTKKLRAELA.

Residues 16–19 (RELK) and Lys-112 each bind 5-methyltetrahydropteroyltri-L-glutamate. L-homocysteine-binding positions include 432 to 434 (IGS) and Glu-485. L-methionine contacts are provided by residues 432–434 (IGS) and Glu-485. 5-methyltetrahydropteroyltri-L-glutamate contacts are provided by residues 516-517 (RC) and Trp-562. Asp-600 lines the L-homocysteine pocket. Position 600 (Asp-600) interacts with L-methionine. 5-methyltetrahydropteroyltri-L-glutamate is bound at residue Glu-606. 3 residues coordinate Zn(2+): His-642, Cys-644, and Glu-666. The Proton donor role is filled by His-695. Residue Cys-727 coordinates Zn(2+).

This sequence belongs to the vitamin-B12 independent methionine synthase family. Requires Zn(2+) as cofactor.

The catalysed reaction is 5-methyltetrahydropteroyltri-L-glutamate + L-homocysteine = tetrahydropteroyltri-L-glutamate + L-methionine. It participates in amino-acid biosynthesis; L-methionine biosynthesis via de novo pathway; L-methionine from L-homocysteine (MetE route): step 1/1. Catalyzes the transfer of a methyl group from 5-methyltetrahydrofolate to homocysteine resulting in methionine formation. This is 5-methyltetrahydropteroyltriglutamate--homocysteine methyltransferase from Haemophilus influenzae (strain ATCC 51907 / DSM 11121 / KW20 / Rd).